Here is a 593-residue protein sequence, read N- to C-terminus: MTADNAIFIPPYKADDQDVVVELNNRFGAEAFVAQETRTGMPVLWVKRAQLKEVLSFLRGVAKPYSMLYDLHGVDERLRTQRRGLPAADFSVFYHLLSVERNSDVMIKVSLSEGDLNLPTVTGIWPNANWYEREVWDMFGIDFAGHPHLSRIMMPPTWEGHPLRKDYPARATEFDPYSLTLAKQQLEEESARFNPEAWGMKRQGANEDYMFLNLGPNHPSAHGAFRIVLQLDGEEIVDCVPDIGYHHRGAEKMAERQSWHSFIPYTDRIDYLGGVMNNLPYVLAVEKLAGIKVPQKVDVIRIMLAEFFRITSHLLFLGTYIQDVGAMTPVFFTFTDRQRAYTVIEAITGFRLHPAWYRIGGVAHDLPRGWDKLVKDFVEWLPKRLDEYTKAALQNSILKGRTIGVAAYNTKEALEWGTTGAGLRSTGCDFDLRKARPYSGYENFEFEVPLAHNGDAYDRCMVRVEEMRQSIRIIDQCLRNMPEGPYKADHPLTTPPPKERTLQHIETLITHFLQVSWGPVMPANESFQMIEATKGINSYYLTSDGGTMSYRTRIRTPSYPHLQQIPSVIKGSMVADLIAYLGSIDFVMADVDR.

The interval 1 to 184 is NADH dehydrogenase I subunit C; it reads MTADNAIFIP…DPYSLTLAKQ (184 aa). Positions 208–593 are NADH dehydrogenase I subunit D; sequence DYMFLNLGPN…IDFVMADVDR (386 aa).

It in the N-terminal section; belongs to the complex I 30 kDa subunit family. In the C-terminal section; belongs to the complex I 49 kDa subunit family. NDH-1 is composed of 13 different subunits. Subunits NuoB, CD, E, F, and G constitute the peripheral sector of the complex.

The protein resides in the cell inner membrane. It carries out the reaction a quinone + NADH + 5 H(+)(in) = a quinol + NAD(+) + 4 H(+)(out). Its function is as follows. NDH-1 shuttles electrons from NADH, via FMN and iron-sulfur (Fe-S) centers, to quinones in the respiratory chain. The immediate electron acceptor for the enzyme in this species is believed to be ubiquinone. Couples the redox reaction to proton translocation (for every two electrons transferred, four hydrogen ions are translocated across the cytoplasmic membrane), and thus conserves the redox energy in a proton gradient. The sequence is that of NADH-quinone oxidoreductase subunit C/D from Pseudomonas putida (strain GB-1).